A 307-amino-acid chain; its full sequence is Olfactory receptor 5M3 (307 aa).

Residues 1–23 are Extracellular-facing; the sequence is MLNFTDVTEFILLGLTSRREWQV. Residue Asn-3 is glycosylated (N-linked (GlcNAc...) asparagine). Residues 24–44 form a helical membrane-spanning segment; sequence LFFIIFLVVYIITMVGNIGMM. Residues 45-52 are Cytoplasmic-facing; sequence VLIKVSPQ. The helical transmembrane segment at 53–73 threads the bilayer; it reads LNNPMYFFLSHLSFVDVWFSS. Residues 74–97 are Extracellular-facing; sequence NVTPKMLENLLSDKKTITYAGCLV. Cysteines 95 and 187 form a disulfide. Residues 98–118 traverse the membrane as a helical segment; sequence QCFFFIALVHVEIFILAAMAF. Residues 119 to 137 lie on the Cytoplasmic side of the membrane; the sequence is DRYMAIGNPLLYGSKMSRV. The chain crosses the membrane as a helical span at residues 138-158; that stretch reads VCIRLITFPYIYGFLTSLAAT. At 159–194 the chain is on the extracellular side; the sequence is LWTYGLYFCGKIEINHFYCADPPLIKMACAGTFVKE. The helical transmembrane segment at 195-215 threads the bilayer; the sequence is YTMIILAGINFTYSLTVIIIS. Topologically, residues 216–235 are cytoplasmic; sequence YLFILIAILRMRSAEGRQKA. The chain crosses the membrane as a helical span at residues 236–256; it reads FSTCGSHLTAVIIFYGTLIFM. Topologically, residues 257-269 are extracellular; the sequence is YLRRPTEESVEQG. The helical transmembrane segment at 270–290 threads the bilayer; the sequence is KMVAVFYTTVIPMLNPMIYSL. The Cytoplasmic segment spans residues 291–307; that stretch reads RNKDVKKAMMKVISRSC.

This sequence belongs to the G-protein coupled receptor 1 family.

The protein localises to the cell membrane. Its function is as follows. Odorant receptor. This chain is Olfactory receptor 5M3 (OR5M3), found in Homo sapiens (Human).